Consider the following 168-residue polypeptide: Transcriptional repressor NrdR (168 aa).

Residues 3-34 fold into a zinc finger; that stretch reads CPFCQDAENKVIDSRESHEGSVIRRRRECLTC. One can recognise an ATP-cone domain in the interval 49 to 139; sequence PLIVKKDGRR…VYRSFRDIAE (91 aa).

Belongs to the NrdR family. The cofactor is Zn(2+).

Functionally, negatively regulates transcription of bacterial ribonucleotide reductase nrd genes and operons by binding to NrdR-boxes. The polypeptide is Transcriptional repressor NrdR (Myxococcus xanthus (strain DK1622)).